A 252-amino-acid chain; its full sequence is NAD-dependent protein deacetylase (252 aa).

Positions 1 to 248 (MYLVEEAKKV…PEVISHIQSL (248 aa)) constitute a Deacetylase sirtuin-type domain. Ala-26, Thr-30, Phe-37, Arg-38, Gln-102, Val-104, Asp-105, and His-120 together coordinate NAD(+). Nicotinamide is bound at residue Phe-37. Positions 104 and 105 each coordinate nicotinamide. The Proton acceptor role is filled by His-120. Cys-128, Cys-131, Cys-153, and Cys-155 together coordinate Zn(2+). NAD(+) is bound by residues Ser-191, Ser-192, Asn-216, and Ile-234.

This sequence belongs to the sirtuin family. Class U subfamily. Zn(2+) is required as a cofactor.

Its subcellular location is the cytoplasm. The enzyme catalyses N(6)-acetyl-L-lysyl-[protein] + NAD(+) + H2O = 2''-O-acetyl-ADP-D-ribose + nicotinamide + L-lysyl-[protein]. Its function is as follows. NAD-dependent protein deacetylase which modulates the activities of several enzymes which are inactive in their acetylated form. Deacetylates the N-terminal lysine residue of Alba, the major archaeal chromatin protein and that, in turn, increases Alba's DNA binding affinity, thereby repressing transcription. This is NAD-dependent protein deacetylase from Sulfolobus acidocaldarius (strain ATCC 33909 / DSM 639 / JCM 8929 / NBRC 15157 / NCIMB 11770).